We begin with the raw amino-acid sequence, 460 residues long: Bifunctional beta-D-glucosidase/beta-D-fucosidase (460 aa).

Glu168 acts as the Proton donor in catalysis. Glu362 functions as the Nucleophile in the catalytic mechanism.

The protein belongs to the glycosyl hydrolase 1 family. In terms of assembly, monomer.

The protein localises to the secreted. It catalyses the reaction Hydrolysis of terminal, non-reducing beta-D-glucosyl residues with release of beta-D-glucose.. The catalysed reaction is Hydrolysis of terminal non-reducing beta-D-fucose residues in beta-D-fucosides.. Inhibited by Cu(2+), Ag(+) and Hg(+), but not by other cations such as Mg(2+), Ca(2+), Mn(2+) and Co(2+). Inhibited by 1-amino-1-deoxy-D-glucose and p-chloromercuribenzoic acid, but not by EDTA or dithiothreitol. Inhibited by the disaccharides sucrose, lactose and cellobiose. The monosaccharides D-fructose, D-mannose, D-xylose and D-glucose increase the beta-D-fucosidase activity, but not the beta-D-glucosidase activity. D-glucose inhibits the beta-D-glucosidase activity, but promotes the beta-D-fucosidase activity. D-fucose inhibits the beta-D-glucosidase activity and does not significantly affect the beta-D-fucosidase activity. Its function is as follows. Bifunctional beta-D-glucosidase/beta-D-fucosidase. Activity towards pNP-beta-D-fucoside is about 80-85% of the activity towards pNP-beta-D-glucoside. Also has slight activity (less than 10%) towards pNP-beta-D-galactoside, and very low activity (less than 1%) towards pNP-beta-D-xyloside. Hydrolyzes laminaribiose, sophorose, cellobiose and gentobiose. Not active against maltose, pNP-alpha-D-glucoside or pNP-beta-L-fucoside. This chain is Bifunctional beta-D-glucosidase/beta-D-fucosidase, found in Bifidobacterium breve.